A 347-amino-acid polypeptide reads, in one-letter code: MTLDHQIINPTLKWSQPAVPSGGPLVQHAHTTLDSDAGLTENPLTKLLAIGKEDDNAQWHMEDVIEDIIGMESSFKEEGADSPLLMQRTLSGSILDVYSGEQGISPINMGLTSASCPSSLPMKREITETDTRALAKERQKKDNHNLIERRRRYNINYRIKELGTLIPKSNDPDMRWNKGTILKASVEYIKWLQKEQQRARELEHRQKKLEQANRRLLLRIQELEIQARTHGLPTLASLGTVDLGAHVTKQQSHPEQNSVDYCQQLTVSQGPSPELCDQAIAFSDPLSYFTDLSFSAALKEEQRLDGMLLDDTISPFGTDPLLSATSPAVSKESSRRSSFSSDDGDEL.

Positions 1–119 (MTLDHQIINP…GLTSASCPSS (119 aa)) are necessary for transcriptional transactivation. The bHLH domain maps to 139–192 (QKKDNHNLIERRRRYNINYRIKELGTLIPKSNDPDMRWNKGTILKASVEYIKWL). The segment at 271–347 (PSPELCDQAI…SFSSDDGDEL (77 aa)) is necessary for transcriptional transactivation. Residues 319-347 (DPLLSATSPAVSKESSRRSSFSSDDGDEL) are disordered. Over residues 326-341 (SPAVSKESSRRSSFSS) the composition is skewed to low complexity.

The protein belongs to the MiT/TFE family. Homodimer. Forms heterodimers with TFE3. Forms heterodimers with MITF. Interacts with MITF. Expressed moderately in spleen, kidney, bone marrow, small intestine and leukocytes. Expressed weakly in testis, trachea and colon.

It localises to the nucleus. In terms of biological role, transcriptional regulator that acts as a repressor or an activator. Acts as a transcriptional repressor on minimal promoter containing element F (that includes an E-box sequence). Binds to element F in an E-box sequence-specific manner. Acts as a transcriptional transactivator on the proximal promoter region of the tartrate-resistant acid phosphatase (TRAP) E-box containing promoter. Collaborates with MITF in target gene activation. Acts as a transcriptional repressor on minimal promoter containing mu E3 enhancer sequence. Binds to mu E3 DNA sequence of the immunoglobulin heavy-chain gene enhancer. Binds DNA in a homo- or heterodimeric form. The sequence is that of Transcription factor EC (TFEC) from Homo sapiens (Human).